The sequence spans 83 residues: Retinal cone rhodopsin-sensitive cGMP 3',5'-cyclic phosphodiesterase subunit gamma (83 aa).

Residues 1–17 (MSDNTVLAPPTSNQGPT) are compositionally biased toward polar residues. A disordered region spans residues 1–51 (MSDNTVLAPPTSNQGPTTPRKGPPKFKQRQTRQFKSKPPKKGVKGFGDDIP). Positions 22 to 43 (GPPKFKQRQTRQFKSKPPKKGV) are enriched in basic residues.

It belongs to the rod/cone cGMP-PDE gamma subunit family. In terms of assembly, tetramer composed of two catalytic chains (alpha and beta), and two inhibitory chains (gamma).

It carries out the reaction 3',5'-cyclic GMP + H2O = GMP + H(+). Functionally, participates in processes of transmission and amplification of the visual signal. cGMP-PDEs are the effector molecules in G-protein-mediated phototransduction in vertebrate rods and cones. The chain is Retinal cone rhodopsin-sensitive cGMP 3',5'-cyclic phosphodiesterase subunit gamma (PDE6H) from Bos taurus (Bovine).